Here is a 1034-residue protein sequence, read N- to C-terminus: Phosphoenolpyruvate carboxylase (1034 aa).

Active-site residues include His203 and Lys680.

The protein belongs to the PEPCase type 1 family. Mg(2+) is required as a cofactor.

It carries out the reaction oxaloacetate + phosphate = phosphoenolpyruvate + hydrogencarbonate. Functionally, forms oxaloacetate, a four-carbon dicarboxylic acid source for the tricarboxylic acid cycle. This is Phosphoenolpyruvate carboxylase (ppc) from Synechocystis sp. (strain ATCC 27184 / PCC 6803 / Kazusa).